The primary structure comprises 632 residues: Bestrophin homolog 24 (632 aa).

A run of 4 helical transmembrane segments spans residues 28-48, 83-103, 234-254, and 271-291; these read IWKA…ILSV, GFFV…IGFI, IMYP…CLLA, and LYFP…MKVA. Disordered regions lie at residues 491 to 516 and 562 to 632; these read LSNK…EHPF and ETEV…TKFE. A compositionally biased stretch (basic and acidic residues) spans 563–602; sequence TEVKRDEKKKKEEELREEGDNGKEEKDNKEDKKEEQDRPS. Over residues 623–632 the composition is skewed to basic residues; that stretch reads PHLRPPTKFE.

It belongs to the anion channel-forming bestrophin (TC 1.A.46) family. Calcium-sensitive chloride channel subfamily. Forms oligomers.

The protein resides in the cell membrane. Its function is as follows. Forms chloride channels. The chain is Bestrophin homolog 24 (best-24) from Caenorhabditis elegans.